The chain runs to 552 residues: Putative transport protein HAPS_0158 (552 aa).

5 helical membrane passes run 4 to 24 (IALT…IGHI), 28 to 48 (GVSL…HFMT), 65 to 85 (FGLI…FFAS), 95 to 115 (AFAV…HKIF), and 157 to 177 (MGYA…MWLI). 2 consecutive RCK C-terminal domains span residues 193–275 (DSAT…ILGE) and 277–360 (VNVS…IIGN). 6 consecutive transmembrane segments (helical) span residues 370-390 (MLPI…PIYL), 393-413 (FPVA…LILA), 438-458 (IVLF…NTLL), 463-483 (LAWI…TGLV), 492-512 (YLSL…LAFA), and 532-552 (LVMF…WVAG).

This sequence belongs to the AAE transporter (TC 2.A.81) family. YidE subfamily.

It localises to the cell membrane. The polypeptide is Putative transport protein HAPS_0158 (Glaesserella parasuis serovar 5 (strain SH0165) (Haemophilus parasuis)).